We begin with the raw amino-acid sequence, 550 residues long: Hydroxylamine reductase (550 aa).

[2Fe-2S] cluster is bound by residues C3, C6, C18, and C25. Hybrid [4Fe-2O-2S] cluster is bound by residues H249, E273, C317, C405, C433, C458, E492, and K494. C405 is modified (cysteine persulfide).

Belongs to the HCP family. The cofactor is [2Fe-2S] cluster. Requires hybrid [4Fe-2O-2S] cluster as cofactor.

Its subcellular location is the cytoplasm. It carries out the reaction A + NH4(+) + H2O = hydroxylamine + AH2 + H(+). Functionally, catalyzes the reduction of hydroxylamine to form NH(3) and H(2)O. The sequence is that of Hydroxylamine reductase from Proteus mirabilis (strain HI4320).